We begin with the raw amino-acid sequence, 189 residues long: Potassium-transporting ATPase KdpC subunit (189 aa).

Residues leucine 5 to leucine 25 traverse the membrane as a helical segment.

The protein belongs to the KdpC family. As to quaternary structure, the system is composed of three essential subunits: KdpA, KdpB and KdpC.

The protein localises to the cell membrane. Functionally, part of the high-affinity ATP-driven potassium transport (or Kdp) system, which catalyzes the hydrolysis of ATP coupled with the electrogenic transport of potassium into the cytoplasm. This subunit acts as a catalytic chaperone that increases the ATP-binding affinity of the ATP-hydrolyzing subunit KdpB by the formation of a transient KdpB/KdpC/ATP ternary complex. In Mycobacterium bovis (strain ATCC BAA-935 / AF2122/97), this protein is Potassium-transporting ATPase KdpC subunit.